An 820-amino-acid polypeptide reads, in one-letter code: Nuclear pore complex protein Nup93 (820 aa).

It belongs to the nucleoporin interacting component (NIC) family.

It localises to the nucleus membrane. The protein localises to the nucleus. The protein resides in the nuclear pore complex. Its function is as follows. Plays a role in the nuclear pore complex (NPC) assembly and/or maintenance. The protein is Nuclear pore complex protein Nup93 (dye) of Danio rerio (Zebrafish).